A 593-amino-acid chain; its full sequence is Probable E3 ubiquitin-protein ligase ARI2 (593 aa).

The TRIAD supradomain stretch occupies residues 120–334 (SMMSCDICVE…ISGHSCGRFQ (215 aa)). Residues cysteine 124, cysteine 127, cysteine 141, histidine 143, cysteine 146, cysteine 149, cysteine 168, cysteine 173, cysteine 215, cysteine 221, cysteine 237, cysteine 239, cysteine 244, cysteine 247, histidine 252, cysteine 257, cysteine 284, and cysteine 287 each contribute to the Zn(2+) site. An RING-type 1 zinc finger spans residues 124-173 (CDICVEDVPGYQLTRMDCGHSFCNNCWTGHFTVKINEGQSKRIICMAHKC). Residues 195-257 (EKFDRFLLES…SSQAHSPCSC (63 aa)) form an IBR-type zinc finger. The RING-type 2; atypical zinc-finger motif lies at 284–312 (CPKCHKPVEKNGGCNLVTCLCRQSFCWLC). Cysteine 297 is a catalytic residue. Cysteine 302, cysteine 304, cysteine 309, cysteine 312, histidine 320, and cysteine 330 together coordinate Zn(2+).

The protein belongs to the RBR family. Ariadne subfamily. Requires Zn(2+) as cofactor. As to expression, ubiquitous.

The catalysed reaction is [E2 ubiquitin-conjugating enzyme]-S-ubiquitinyl-L-cysteine + [acceptor protein]-L-lysine = [E2 ubiquitin-conjugating enzyme]-L-cysteine + [acceptor protein]-N(6)-ubiquitinyl-L-lysine.. Its pathway is protein modification; protein ubiquitination. Its function is as follows. Might act as an E3 ubiquitin-protein ligase, or as part of E3 complex, which accepts ubiquitin from specific E2 ubiquitin-conjugating enzymes and then transfers it to substrates. This Arabidopsis thaliana (Mouse-ear cress) protein is Probable E3 ubiquitin-protein ligase ARI2 (ARI2).